We begin with the raw amino-acid sequence, 493 residues long: Telomere-binding protein subunit alpha (493 aa).

The segment at 1-30 is disordered; sequence MSSAKRSTSRVSKKKAAPAKDGAPKKREQS. The segment covering 7–17 has biased composition (basic residues); the sequence is STSRVSKKKAA.

Belongs to the telombin family. As to quaternary structure, heterodimer of an alpha and a beta subunit.

The protein resides in the nucleus. Its subcellular location is the chromosome. The protein localises to the telomere. May function as protective capping of the single-stranded telomeric overhang. May also participate in telomere length regulation during DNA replication. The sequence is that of Telomere-binding protein subunit alpha (STY56V) from Stylonychia mytilus (Ciliate).